An 876-amino-acid chain; its full sequence is Phosphoenolpyruvate carboxylase (876 aa).

Residues histidine 138 and lysine 543 contribute to the active site.

It belongs to the PEPCase type 1 family. The cofactor is Mg(2+).

It carries out the reaction oxaloacetate + phosphate = phosphoenolpyruvate + hydrogencarbonate. Forms oxaloacetate, a four-carbon dicarboxylic acid source for the tricarboxylic acid cycle. The protein is Phosphoenolpyruvate carboxylase of Pseudomonas fluorescens (strain ATCC BAA-477 / NRRL B-23932 / Pf-5).